The following is a 360-amino-acid chain: 1-deoxy-D-xylulose 5-phosphate reductoisomerase (360 aa).

5 residues coordinate NADPH: serine 7, glycine 8, serine 9, isoleucine 10, and asparagine 115. Lysine 116 is a 1-deoxy-D-xylulose 5-phosphate binding site. Glutamate 117 serves as a coordination point for NADPH. Residue aspartate 135 participates in Mn(2+) binding. 1-deoxy-D-xylulose 5-phosphate-binding residues include serine 136, glutamate 137, serine 159, and histidine 182. Glutamate 137 lines the Mn(2+) pocket. Residue glycine 188 coordinates NADPH. 1-deoxy-D-xylulose 5-phosphate-binding residues include serine 195, asparagine 200, lysine 201, and glutamate 204. Glutamate 204 is a binding site for Mn(2+).

The protein belongs to the DXR family. Requires Mg(2+) as cofactor. The cofactor is Mn(2+).

It catalyses the reaction 2-C-methyl-D-erythritol 4-phosphate + NADP(+) = 1-deoxy-D-xylulose 5-phosphate + NADPH + H(+). The protein operates within isoprenoid biosynthesis; isopentenyl diphosphate biosynthesis via DXP pathway; isopentenyl diphosphate from 1-deoxy-D-xylulose 5-phosphate: step 1/6. Catalyzes the NADPH-dependent rearrangement and reduction of 1-deoxy-D-xylulose-5-phosphate (DXP) to 2-C-methyl-D-erythritol 4-phosphate (MEP). The chain is 1-deoxy-D-xylulose 5-phosphate reductoisomerase from Campylobacter fetus subsp. fetus (strain 82-40).